A 244-amino-acid chain; its full sequence is 6-carboxyhexanoate--CoA ligase (244 aa).

The protein belongs to the BioW family. Homodimer. It depends on Mg(2+) as a cofactor.

It carries out the reaction heptanedioate + ATP + CoA = 6-carboxyhexanoyl-CoA + AMP + diphosphate. It participates in metabolic intermediate metabolism; pimeloyl-CoA biosynthesis; pimeloyl-CoA from pimelate: step 1/1. In terms of biological role, catalyzes the transformation of pimelate into pimeloyl-CoA with concomitant hydrolysis of ATP to AMP. This Methanococcus maripaludis (strain DSM 14266 / JCM 13030 / NBRC 101832 / S2 / LL) protein is 6-carboxyhexanoate--CoA ligase.